A 67-amino-acid polypeptide reads, in one-letter code: Large ribosomal subunit protein bL35 (67 aa).

Residues 1-11 are compositionally biased toward basic residues; that stretch reads MPKLKTRKAAA. Residues 1–22 are disordered; it reads MPKLKTRKAAAKRFEATGSGKK.

Belongs to the bacterial ribosomal protein bL35 family.

The sequence is that of Large ribosomal subunit protein bL35 from Microcystis aeruginosa (strain NIES-843 / IAM M-2473).